Reading from the N-terminus, the 475-residue chain is Aspartyl/glutamyl-tRNA(Asn/Gln) amidotransferase subunit B (475 aa).

The protein belongs to the GatB/GatE family. GatB subfamily. As to quaternary structure, heterotrimer of A, B and C subunits.

It carries out the reaction L-glutamyl-tRNA(Gln) + L-glutamine + ATP + H2O = L-glutaminyl-tRNA(Gln) + L-glutamate + ADP + phosphate + H(+). The enzyme catalyses L-aspartyl-tRNA(Asn) + L-glutamine + ATP + H2O = L-asparaginyl-tRNA(Asn) + L-glutamate + ADP + phosphate + 2 H(+). Functionally, allows the formation of correctly charged Asn-tRNA(Asn) or Gln-tRNA(Gln) through the transamidation of misacylated Asp-tRNA(Asn) or Glu-tRNA(Gln) in organisms which lack either or both of asparaginyl-tRNA or glutaminyl-tRNA synthetases. The reaction takes place in the presence of glutamine and ATP through an activated phospho-Asp-tRNA(Asn) or phospho-Glu-tRNA(Gln). This is Aspartyl/glutamyl-tRNA(Asn/Gln) amidotransferase subunit B from Chromobacterium violaceum (strain ATCC 12472 / DSM 30191 / JCM 1249 / CCUG 213 / NBRC 12614 / NCIMB 9131 / NCTC 9757 / MK).